Consider the following 554-residue polypeptide: CTP synthase (554 aa).

Residues 1 to 265 form an amidoligase domain region; it reads MTPLIFVTGG…DEIVVNQLKL (265 aa). Ser-13 serves as a coordination point for CTP. Ser-13 contributes to the UTP binding site. Position 14–19 (14–19) interacts with ATP; sequence SLGKGI. Residues Asp-71 and Glu-139 each coordinate Mg(2+). Residues 146 to 148, 186 to 191, and Lys-222 contribute to the CTP site; these read DIE and KTKPTQ. UTP-binding positions include 186–191 and Lys-222; that span reads KTKPTQ. One can recognise a Glutamine amidotransferase type-1 domain in the interval 292-545; that stretch reads TIAVVGKYVD…IRAARERKAG (254 aa). Gly-353 is an L-glutamine binding site. Cys-380 acts as the Nucleophile; for glutamine hydrolysis in catalysis. L-glutamine-binding positions include 381-384, Glu-404, and Arg-471; that span reads YGMQ. Residues His-518 and Glu-520 contribute to the active site.

The protein belongs to the CTP synthase family. As to quaternary structure, homotetramer.

It catalyses the reaction UTP + L-glutamine + ATP + H2O = CTP + L-glutamate + ADP + phosphate + 2 H(+). The enzyme catalyses L-glutamine + H2O = L-glutamate + NH4(+). The catalysed reaction is UTP + NH4(+) + ATP = CTP + ADP + phosphate + 2 H(+). It participates in pyrimidine metabolism; CTP biosynthesis via de novo pathway; CTP from UDP: step 2/2. Allosterically activated by GTP, when glutamine is the substrate; GTP has no effect on the reaction when ammonia is the substrate. The allosteric effector GTP functions by stabilizing the protein conformation that binds the tetrahedral intermediate(s) formed during glutamine hydrolysis. Inhibited by the product CTP, via allosteric rather than competitive inhibition. Functionally, catalyzes the ATP-dependent amination of UTP to CTP with either L-glutamine or ammonia as the source of nitrogen. Regulates intracellular CTP levels through interactions with the four ribonucleotide triphosphates. The polypeptide is CTP synthase (Stenotrophomonas maltophilia (strain K279a)).